Here is a 215-residue protein sequence, read N- to C-terminus: Glycerol-3-phosphate acyltransferase (215 aa).

5 helical membrane passes run Ser-14–Val-34, Thr-63–Ala-83, Trp-92–Leu-112, Met-128–Phe-148, and Leu-154–Ala-174.

Belongs to the PlsY family. As to quaternary structure, probably interacts with PlsX.

Its subcellular location is the cell inner membrane. The catalysed reaction is an acyl phosphate + sn-glycerol 3-phosphate = a 1-acyl-sn-glycero-3-phosphate + phosphate. Its pathway is lipid metabolism; phospholipid metabolism. Catalyzes the transfer of an acyl group from acyl-phosphate (acyl-PO(4)) to glycerol-3-phosphate (G3P) to form lysophosphatidic acid (LPA). This enzyme utilizes acyl-phosphate as fatty acyl donor, but not acyl-CoA or acyl-ACP. In Bordetella bronchiseptica (strain ATCC BAA-588 / NCTC 13252 / RB50) (Alcaligenes bronchisepticus), this protein is Glycerol-3-phosphate acyltransferase.